The following is a 421-amino-acid chain: Tyrosine--tRNA ligase (421 aa).

Tyr35 contacts L-tyrosine. The 'HIGH' region signature appears at 40–49 (PTADSLHIGH). Residues Tyr170 and Gln174 each contribute to the L-tyrosine site. The 'KMSKS' region signature appears at 232 to 236 (KFGKT). ATP is bound at residue Lys235. One can recognise an S4 RNA-binding domain in the interval 355–421 (LSLVDVLVES…GKKKYFLITY (67 aa)).

The protein belongs to the class-I aminoacyl-tRNA synthetase family. TyrS type 1 subfamily. As to quaternary structure, homodimer.

The protein resides in the cytoplasm. It carries out the reaction tRNA(Tyr) + L-tyrosine + ATP = L-tyrosyl-tRNA(Tyr) + AMP + diphosphate + H(+). Its function is as follows. Catalyzes the attachment of tyrosine to tRNA(Tyr) in a two-step reaction: tyrosine is first activated by ATP to form Tyr-AMP and then transferred to the acceptor end of tRNA(Tyr). This is Tyrosine--tRNA ligase from Bacillus velezensis (strain DSM 23117 / BGSC 10A6 / LMG 26770 / FZB42) (Bacillus amyloliquefaciens subsp. plantarum).